A 548-amino-acid polypeptide reads, in one-letter code: Hydroxylamine reductase (548 aa).

Positions 3, 6, 15, and 21 each coordinate [4Fe-4S] cluster. Histidine 239, glutamate 263, cysteine 307, cysteine 401, cysteine 429, cysteine 454, glutamate 489, and lysine 491 together coordinate hybrid [4Fe-2O-2S] cluster. Cysteine 401 bears the Cysteine persulfide mark.

This sequence belongs to the HCP family. It depends on [4Fe-4S] cluster as a cofactor. Hybrid [4Fe-2O-2S] cluster serves as cofactor.

The protein resides in the cytoplasm. The enzyme catalyses A + NH4(+) + H2O = hydroxylamine + AH2 + H(+). In terms of biological role, catalyzes the reduction of hydroxylamine to form NH(3) and H(2)O. This is Hydroxylamine reductase from Desulfosudis oleivorans (strain DSM 6200 / JCM 39069 / Hxd3) (Desulfococcus oleovorans).